Here is a 227-residue protein sequence, read N- to C-terminus: uncharacterized protein (227 aa).

Residue 17 to 24 (GKTGCGKT) participates in ATP binding.

This is an uncharacterized protein from Methanocaldococcus jannaschii (strain ATCC 43067 / DSM 2661 / JAL-1 / JCM 10045 / NBRC 100440) (Methanococcus jannaschii).